A 146-amino-acid polypeptide reads, in one-letter code: Ribonuclease H (146 aa).

The RNase H type-1 domain maps to 4-145 (ELNKVVVYTD…ADMLARSQIV (142 aa)). Mg(2+) contacts are provided by Asp13, Glu51, Asp73, and Asp137.

This sequence belongs to the RNase H family. In terms of assembly, monomer. It depends on Mg(2+) as a cofactor.

The protein resides in the cytoplasm. It carries out the reaction Endonucleolytic cleavage to 5'-phosphomonoester.. Functionally, endonuclease that specifically degrades the RNA of RNA-DNA hybrids. The protein is Ribonuclease H of Ehrlichia ruminantium (strain Gardel).